The chain runs to 325 residues: Peroxidase RIP1 (325 aa).

The first 21 residues, 1–21 (MASSSPCQIFLVFVMVTLVTS), serve as a signal peptide directing secretion. 4 disulfides stabilise this stretch: cysteine 38-cysteine 118, cysteine 71-cysteine 76, cysteine 125-cysteine 321, and cysteine 206-cysteine 231. Catalysis depends on histidine 69, which acts as the Proton acceptor. Ca(2+) is bound by residues aspartate 70, valine 73, glycine 75, aspartate 77, and serine 79. Asparagine 87 carries N-linked (GlcNAc...) asparagine glycosylation. Residue proline 169 participates in substrate binding. Asparagine 174 is a glycosylation site (N-linked (GlcNAc...) asparagine). Histidine 199 contacts heme b. Ca(2+) is bound at residue threonine 200. An N-linked (GlcNAc...) asparagine glycan is attached at asparagine 215. The Ca(2+) site is built by aspartate 244, threonine 246, and glutamate 251.

Belongs to the peroxidase family. Classical plant (class III) peroxidase subfamily. Requires heme b as cofactor. Ca(2+) serves as cofactor. As to expression, expressed in the differentiating root epidermis following inoculation with the bacterial symbiont Sinorhizobium meliloti.

The protein resides in the secreted. It catalyses the reaction 2 a phenolic donor + H2O2 = 2 a phenolic radical donor + 2 H2O. In terms of biological role, removal of H(2)O(2), oxidation of toxic reductants, biosynthesis and degradation of lignin, suberization, auxin catabolism, response to environmental stresses such as wounding, pathogen attack and oxidative stress. These functions might be dependent on each isozyme/isoform in each plant tissue. The sequence is that of Peroxidase RIP1 from Medicago truncatula (Barrel medic).